Here is a 259-residue protein sequence, read N- to C-terminus: Ubiquinone/menaquinone biosynthesis C-methyltransferase UbiE (259 aa).

S-adenosyl-L-methionine-binding positions include threonine 82, aspartate 103, 131–132, and serine 148; that span reads NA.

It belongs to the class I-like SAM-binding methyltransferase superfamily. MenG/UbiE family.

It carries out the reaction a 2-demethylmenaquinol + S-adenosyl-L-methionine = a menaquinol + S-adenosyl-L-homocysteine + H(+). The enzyme catalyses a 2-methoxy-6-(all-trans-polyprenyl)benzene-1,4-diol + S-adenosyl-L-methionine = a 5-methoxy-2-methyl-3-(all-trans-polyprenyl)benzene-1,4-diol + S-adenosyl-L-homocysteine + H(+). It functions in the pathway quinol/quinone metabolism; menaquinone biosynthesis; menaquinol from 1,4-dihydroxy-2-naphthoate: step 2/2. It participates in cofactor biosynthesis; ubiquinone biosynthesis. Functionally, methyltransferase required for the conversion of demethylmenaquinol (DMKH2) to menaquinol (MKH2) and the conversion of 2-polyprenyl-6-methoxy-1,4-benzoquinol (DDMQH2) to 2-polyprenyl-3-methyl-6-methoxy-1,4-benzoquinol (DMQH2). This chain is Ubiquinone/menaquinone biosynthesis C-methyltransferase UbiE, found in Vibrio parahaemolyticus serotype O3:K6 (strain RIMD 2210633).